Here is a 126-residue protein sequence, read N- to C-terminus: Protein HEAT-INDUCED TAS1 TARGET 3 (126 aa).

This sequence belongs to the heat induced plant HTT protein family. As to expression, expressed in seedlings, leaves, stems, inflorescences and siliques.

It is found in the cytoplasm. Its subcellular location is the nucleus. Mediates both basal and acquired thermotolerance. In Arabidopsis thaliana (Mouse-ear cress), this protein is Protein HEAT-INDUCED TAS1 TARGET 3.